Reading from the N-terminus, the 294-residue chain is Cutinase (294 aa).

The N-terminal stretch at 1 to 33 (MLRARPSHRLASAAAVVAATGAALLAGSSPAAA) is a signal peptide. Cys-36 and Cys-107 are disulfide-bonded. The Nucleophile role is filled by Ser-118. Residues Cys-180 and Cys-187 are joined by a disulfide bond. Asp-184 is a catalytic residue. His-198 serves as the catalytic Proton donor/acceptor. The interval 222 to 241 (GTPTTPTPTPTPTPVPTTCV) is disordered. Residues 226-236 (TPTPTPTPTPV) are compositionally biased toward pro residues. The segment at 240–294 (CVRDSTRDHVAADRAVSLYGRAYARGSRDSLGATSSYNVVSLQQVEGGWRLVTAC) is may be involved in substrate binding.

This sequence belongs to the cutinase family.

It is found in the secreted. The catalysed reaction is cutin + H2O = cutin monomers.. It catalyses the reaction a tetradecanoate ester + H2O = an aliphatic alcohol + tetradecanoate + H(+). The enzyme catalyses hexadecanoate ester + H2O = an aliphatic alcohol + hexadecanoate + H(+). It carries out the reaction a butanoate ester + H2O = an aliphatic alcohol + butanoate + H(+). The catalysed reaction is an octanoate ester + H2O = an aliphatic alcohol + octanoate + H(+). In terms of biological role, catalyzes the hydrolysis of cutin, a polyester that forms the structure of plant cuticle. Shows esterase activity towards p-nitrophenol-linked aliphatic esters (pNP-aliphatic esters). Can depolymerize synthetic polyesters such as poly(epsilon-caprolactone) (PCL) and poly(1,3-propylene adipate) (PPA). Exhibits some activity on poly(lactic acid) (PLA). Can bind but not hydrolyze poly(hydroxybutyrate) (PHB). The protein is Cutinase of Kineococcus radiotolerans (strain ATCC BAA-149 / DSM 14245 / SRS30216).